The sequence spans 396 residues: Elongation factor Tu (396 aa).

One can recognise a tr-type G domain in the interval 10-205 (KPHVNIGTIG…AVDESIPDPV (196 aa)). The G1 stretch occupies residues 19–26 (GHVDHGKT). GTP is bound at residue 19–26 (GHVDHGKT). Residue T26 coordinates Mg(2+). The G2 stretch occupies residues 62-66 (GITIN). The tract at residues 83-86 (DAPG) is G3. GTP contacts are provided by residues 83-87 (DAPGH) and 138-141 (NKAD). The G4 stretch occupies residues 138 to 141 (NKAD). Residues 175–177 (SAL) are G5.

Belongs to the TRAFAC class translation factor GTPase superfamily. Classic translation factor GTPase family. EF-Tu/EF-1A subfamily. In terms of assembly, monomer.

The protein resides in the cytoplasm. The catalysed reaction is GTP + H2O = GDP + phosphate + H(+). Its function is as follows. GTP hydrolase that promotes the GTP-dependent binding of aminoacyl-tRNA to the A-site of ribosomes during protein biosynthesis. The chain is Elongation factor Tu from Mycobacterium bovis (strain ATCC BAA-935 / AF2122/97).